We begin with the raw amino-acid sequence, 135 residues long: Small ribosomal subunit protein uS9 (135 aa).

The span at 108-118 (VGDSRRTEPHK) shows a compositional bias: basic and acidic residues. Positions 108-135 (VGDSRRTEPHKPNRSTKGPRAKRQKSYR) are disordered. Basic residues predominate over residues 119 to 135 (PNRSTKGPRAKRQKSYR).

Belongs to the universal ribosomal protein uS9 family. Part of the 30S ribosomal subunit.

This Thermococcus kodakarensis (strain ATCC BAA-918 / JCM 12380 / KOD1) (Pyrococcus kodakaraensis (strain KOD1)) protein is Small ribosomal subunit protein uS9.